The sequence spans 62 residues: Sperm protamine P1 (62 aa).

Positions M1 to Y62 are disordered.

It belongs to the protamine P1 family. In terms of tissue distribution, testis.

The protein resides in the nucleus. Its subcellular location is the chromosome. Its function is as follows. Protamines substitute for histones in the chromatin of sperm during the haploid phase of spermatogenesis. They compact sperm DNA into a highly condensed, stable and inactive complex. The sequence is that of Sperm protamine P1 (PRM1) from Wallabia bicolor (Swamp wallaby).